The chain runs to 257 residues: Large ribosomal subunit protein uL2 (257 aa).

Positions 207–257 (VDHPHGGGNHQHVGHPTTLKRSSPPGQKAGKVAARRTGLIRGGNKEGAADN) are disordered.

Belongs to the universal ribosomal protein uL2 family. In terms of assembly, component of the large ribosomal subunit.

The protein localises to the cytoplasm. In terms of biological role, component of the large ribosomal subunit. The ribosome is a large ribonucleoprotein complex responsible for the synthesis of proteins in the cell. The sequence is that of Large ribosomal subunit protein uL2 (RPL8) from Entamoeba histolytica (strain ATCC 30459 / HM-1:IMSS / ABRM).